A 252-amino-acid chain; its full sequence is MQAVDFNSDMGEGFGPWTIGDGVDNELMGYISSANIATGFHAGDPGTMRRTVERAKALGVAVGAHPGFRDLVGFGRRHINASAQELVDDMLYQLGALREIARAQGVRLQHIKPHGALYMHLARDEEAARLLVENLRVIEPELLLYCMPGSVICRIAQELGQPVIREFYADREYDLSGSIVFTRNVRGYEPQAVAERVLRACRQGVVRTVEGQDLAIEFDSICLHSDTPGALDLVEATRKALDAAGIVVRAPR.

The protein belongs to the LamB/PxpA family. Forms a complex composed of PxpA, PxpB and PxpC.

The enzyme catalyses 5-oxo-L-proline + ATP + 2 H2O = L-glutamate + ADP + phosphate + H(+). Functionally, catalyzes the cleavage of 5-oxoproline to form L-glutamate coupled to the hydrolysis of ATP to ADP and inorganic phosphate. The chain is 5-oxoprolinase subunit A 1 from Pseudomonas putida (strain ATCC 47054 / DSM 6125 / CFBP 8728 / NCIMB 11950 / KT2440).